We begin with the raw amino-acid sequence, 115 residues long: MIQVLLVIICLAVFPYQGSSIILESGNINDYEIVYPKKVAVLPTGAMNSVHPCCDPVTCEPREGEHCISGPCCRNCKFLNAGTICKKAMLDGLNDYCTGISSDCPRNRYKGKEDD.

Positions 1-20 are cleaved as a signal peptide; sequence MIQVLLVIICLAVFPYQGSS. Positions 21-47 are excised as a propeptide; that stretch reads IILESGNINDYEIVYPKKVAVLPTGAM. The region spanning 48–112 is the Disintegrin domain; it reads NSVHPCCDPV…DCPRNRYKGK (65 aa). Cystine bridges form between cysteine 53/cysteine 76, cysteine 67/cysteine 73, cysteine 72/cysteine 97, and cysteine 85/cysteine 104. The Cell attachment site; atypical (MLD) motif lies at 89–91; that stretch reads MLD.

It belongs to the disintegrin family. Dimeric disintegrin subfamily. Heterodimer with subunit beta; disulfide-linked. Expressed by the venom gland.

The protein resides in the secreted. Functionally, potently inhibits adhesion of alpha-4/beta-1 (ITGA4/ITGB1) and alpha-9/beta-1 (ITGA9/ITGB1) integrins to VCAM1, and adhesion of alpha-5/beta-1 (ITGA5/ITGB1) integrin to fibronectin. Has a much less effect on alpha-IIb/beta-3 (ITGA2B/ITGB3) integrin. Also potently inhibits neutrophil migration across TNF-alpha-activated human umbilical endothelial cells. The protein is Disintegrin EC6 subunit alpha of Echis carinatus sochureki (Saw-scaled viper).